The primary structure comprises 446 residues: Exodeoxyribonuclease 7 large subunit (446 aa).

Belongs to the XseA family. Heterooligomer composed of large and small subunits.

It is found in the cytoplasm. The catalysed reaction is Exonucleolytic cleavage in either 5'- to 3'- or 3'- to 5'-direction to yield nucleoside 5'-phosphates.. Its function is as follows. Bidirectionally degrades single-stranded DNA into large acid-insoluble oligonucleotides, which are then degraded further into small acid-soluble oligonucleotides. This is Exodeoxyribonuclease 7 large subunit from Streptococcus pneumoniae serotype 4 (strain ATCC BAA-334 / TIGR4).